The chain runs to 507 residues: Fluoroacetaldehyde dehydrogenase (507 aa).

An NAD(+)-binding site is contributed by 219–225; sequence GFGIEAG. Active-site residues include Glu-263 and Cys-302.

Belongs to the aldehyde dehydrogenase family. As to quaternary structure, homotetramer.

It carries out the reaction fluoroacetaldehyde + NAD(+) + H2O = fluoroacetate + NADH + 2 H(+). In terms of biological role, catalyzes the oxidation of fluoroacetaldehyde to fluoroacetate. Has high affinity for fluoroacetate and glycolaldehyde but not for acetaldehyde. The sequence is that of Fluoroacetaldehyde dehydrogenase from Streptantibioticus cattleyicolor (strain ATCC 35852 / DSM 46488 / JCM 4925 / NBRC 14057 / NRRL 8057) (Streptomyces cattleya).